We begin with the raw amino-acid sequence, 382 residues long: ATP phosphoribosyltransferase regulatory subunit (382 aa).

Belongs to the class-II aminoacyl-tRNA synthetase family. HisZ subfamily. Heteromultimer composed of HisG and HisZ subunits.

The protein localises to the cytoplasm. It functions in the pathway amino-acid biosynthesis; L-histidine biosynthesis; L-histidine from 5-phospho-alpha-D-ribose 1-diphosphate: step 1/9. Required for the first step of histidine biosynthesis. May allow the feedback regulation of ATP phosphoribosyltransferase activity by histidine. The polypeptide is ATP phosphoribosyltransferase regulatory subunit (Acidovorax sp. (strain JS42)).